A 578-amino-acid chain; its full sequence is MKASRFFIGTLKEAPADAEIVSHKLMVRAGMIRRVAGGIYNYLPIGLRSIRKVEAIVREEMNRAGALELLMPAVQPAELWQESGRWEQYGPELLRFKDRKDNDFVIGPTHEEVITDIARNQIKSYRQMPVNFYQIQTKFRDEIRPRFGVMRGREFLMKDAYSFDKDAAGLNESYRKMYDAYVRIFTRLGLEFRAVAADSGSIGGNFSHEFHVIADTGEDAIAYCPTSEFAANIEAAEALPLIAERAAPAQAMEKVATPGKAKCEAVAELLAIPLERTIKSIVLATDNEGAEPTIWLVMLRGDHDLNEIKVSKLPGLKNHRFATEQEIVEWFGTPPGYLGPVGTKKPVKVIADRTVANMSDFVVGANEVDYHIAGVNWGRDLPEPDVADVRNVKKGDPSPDGKGVIDICRGIEVGHVFQLGTKYSEAMGATFLDESGKPQPMLMGCYGVGVTRILGAAIEQNFDDKGIIWPESIAPFELVLCPMGYDRSEMVREAADKLYAELTAAGVDVILDDRGERPGVMFADWELIGVPHRLVIGERGLKDGKVEYQGRRDAEATLLPADAAAATVTEKIRAALAH.

The protein belongs to the class-II aminoacyl-tRNA synthetase family. ProS type 1 subfamily. As to quaternary structure, homodimer.

It localises to the cytoplasm. It carries out the reaction tRNA(Pro) + L-proline + ATP = L-prolyl-tRNA(Pro) + AMP + diphosphate. Catalyzes the attachment of proline to tRNA(Pro) in a two-step reaction: proline is first activated by ATP to form Pro-AMP and then transferred to the acceptor end of tRNA(Pro). As ProRS can inadvertently accommodate and process non-cognate amino acids such as alanine and cysteine, to avoid such errors it has two additional distinct editing activities against alanine. One activity is designated as 'pretransfer' editing and involves the tRNA(Pro)-independent hydrolysis of activated Ala-AMP. The other activity is designated 'posttransfer' editing and involves deacylation of mischarged Ala-tRNA(Pro). The misacylated Cys-tRNA(Pro) is not edited by ProRS. This Burkholderia vietnamiensis (strain G4 / LMG 22486) (Burkholderia cepacia (strain R1808)) protein is Proline--tRNA ligase.